The following is a 345-amino-acid chain: Transcription factor STKL1 (345 aa).

The interval 1 to 145 (MASLENPAID…KKGHAQRVWS (145 aa)) is disordered. The segment covering 11 to 22 (SSSEFESSSEEI) has biased composition (low complexity). The segment covering 23-32 (SSSKESKPKE) has biased composition (basic and acidic residues). Polar residues predominate over residues 37 to 46 (VPSTKTLNSP). A Phosphoserine modification is found at serine 105. A compositionally biased stretch (basic and acidic residues) spans 114–137 (RASEGTTSRDMHVKRIKKEGDNKK).

The protein belongs to the GeBP family. Expressed strongly in leaves and flowers, weakly in roots, and very weakly in stems.

The protein resides in the nucleus. In terms of biological role, transcription repressor that binds DNA in a sequence-specific manner, 5'-GCCT-3', to regulate the expression of PGR. Acts as a modulatory component for the glucose-triggered developmental leaf growth process. In Arabidopsis thaliana (Mouse-ear cress), this protein is Transcription factor STKL1.